The sequence spans 342 residues: Foldase protein PrsA (342 aa).

A signal peptide spans 1-20 (MKKKLILAAAGAMAVFSLAA). The N-palmitoyl cysteine moiety is linked to residue C21. C21 carries S-diacylglycerol cysteine lipidation. The PpiC domain maps to 142-235 (HPEVEAQIIQ…QTYQTTYYVV (94 aa)). The segment at 297–342 (MQTESSSASSEKKESKSSDSKTSDTKTSDSEKATDSSSKTTESSSK) is disordered. A compositionally biased stretch (basic and acidic residues) spans 306–330 (SEKKESKSSDSKTSDTKTSDSEKAT). Low complexity predominate over residues 331-342 (DSSSKTTESSSK).

The protein belongs to the PrsA family.

Its subcellular location is the cell membrane. The enzyme catalyses [protein]-peptidylproline (omega=180) = [protein]-peptidylproline (omega=0). In terms of biological role, plays a major role in protein secretion by helping the post-translocational extracellular folding of several secreted proteins. This Enterococcus faecalis (strain ATCC 700802 / V583) protein is Foldase protein PrsA.